A 523-amino-acid chain; its full sequence is MPEMGALLLTTPALAAPGELLNLSLNASAVAPEGAVLLAMLATLLVDLAGEKVSTRWVPPICYAGLGTALLLLALQWNAPLEPSFLGAFLPDHLAIAFRAVVALSTLLSLMISWRYAEQGGTPVGEYAGILLAATLGGMLLCGATDLVSVFVSLETLSVASYLLSGYMKRDARSSEAALKYLLVGSAAAAVFLYGSSLLYGLSGSTSLEAIGQALLSSPTPLAALALVFVLATVAFKIAAVPFHQWTPDVYEGSPTPVVAFLSVGSKAAGFALALRLLVGCFGSFDTQWKLLFTVLAVLSMTLGNVVALAQTSMKRMLAYSSIGQAGFVMIGLVCGTEDGFAAMVLYTAAYLFMNLGAFACIILFSIRTGSDRIADYAGLYQKDPLITLGLSLCLLSLGGIPPMLGFFGKIYLFFAGWADHQYVLVVVGLITSVISIYYYIGVIKMMVVKEPQEASDAVKAYPPVQWSTLGLPPLRVALVTCVVVTAVGGILSNPLFQWASDAVAGTPLLQQAIASVNGSSLG.

The next 13 helical transmembrane spans lie at 29–49, 57–77, 94–114, 128–148, 182–202, 223–243, 255–275, 291–311, 317–337, 345–365, 389–409, 424–444, and 477–497; these read AVAP…VDLA, WVPP…ALQW, LAIA…MISW, AGIL…TDLV, LLVG…LYGL, AALA…AVPF, PTPV…ALAL, LLFT…ALAQ, MLAY…VCGT, VLYT…IILF, LGLS…GFFG, VLVV…IGVI, and VALV…NPLF.

The protein belongs to the complex I subunit 2 family. As to quaternary structure, NDH-1 can be composed of about 15 different subunits; different subcomplexes with different compositions have been identified which probably have different functions.

It localises to the cellular thylakoid membrane. The enzyme catalyses a plastoquinone + NADH + (n+1) H(+)(in) = a plastoquinol + NAD(+) + n H(+)(out). The catalysed reaction is a plastoquinone + NADPH + (n+1) H(+)(in) = a plastoquinol + NADP(+) + n H(+)(out). Its function is as follows. NDH-1 shuttles electrons from an unknown electron donor, via FMN and iron-sulfur (Fe-S) centers, to quinones in the respiratory and/or the photosynthetic chain. The immediate electron acceptor for the enzyme in this species is believed to be plastoquinone. Couples the redox reaction to proton translocation, and thus conserves the redox energy in a proton gradient. Cyanobacterial NDH-1 also plays a role in inorganic carbon-concentration. This chain is NAD(P)H-quinone oxidoreductase subunit 2, found in Synechococcus sp. (strain WH7803).